A 595-amino-acid chain; its full sequence is Protein halfway (595 aa).

2 disordered regions span residues 1 to 42 and 64 to 98; these read MLLT…ADDE and TGAATEATHSQPVVTAVPATSSTSTSTTVPAPLLP. Asn-250 and Asn-255 each carry an N-linked (GlcNAc...) asparagine glycan. Residues 347–402 enclose the LRRNT domain; sequence ESTKRCMTKCPVIPNYGSCKCRFESIMIIQDDQSKPKCHVDCSNLGLVELPPRLPD. LRR repeat units lie at residues 403-424, 429-450, and 454-475; these read NTFVLNITNNKITSLGDHFQTN, NINRLVADNNQISSIYEFEGTK, and NFQRIYMRNNSLSKIPEYFLNN. The LRRCT domain maps to 489 to 538; sequence NKLQCDCNSAKTLQNWLKERSTDIPDYMEIRCRNIPQSVIELQEAKLCQS.

Has a role in the ecdysone induced cascade; probably indirect control of 'late' ecdysone genes. The sequence is that of Protein halfway (hfw) from Drosophila pseudoobscura pseudoobscura (Fruit fly).